The following is a 188-amino-acid chain: Protein GrpE (188 aa).

The segment at 1–22 is disordered; the sequence is MADEQTLDTQNLDANQAPEASG.

The protein belongs to the GrpE family. In terms of assembly, homodimer.

Its subcellular location is the cytoplasm. Its function is as follows. Participates actively in the response to hyperosmotic and heat shock by preventing the aggregation of stress-denatured proteins, in association with DnaK and GrpE. It is the nucleotide exchange factor for DnaK and may function as a thermosensor. Unfolded proteins bind initially to DnaJ; upon interaction with the DnaJ-bound protein, DnaK hydrolyzes its bound ATP, resulting in the formation of a stable complex. GrpE releases ADP from DnaK; ATP binding to DnaK triggers the release of the substrate protein, thus completing the reaction cycle. Several rounds of ATP-dependent interactions between DnaJ, DnaK and GrpE are required for fully efficient folding. In Pseudomonas fluorescens (strain ATCC BAA-477 / NRRL B-23932 / Pf-5), this protein is Protein GrpE.